A 511-amino-acid chain; its full sequence is Ectonucleoside triphosphate diphosphohydrolase 1 (511 aa).

Residues 1–16 (MEDIKDSKVKRFCSKN) are Cytoplasmic-facing. A helical transmembrane segment spans residues 17–37 (ILIILGFSSVLAVIALIAVGL). The Extracellular portion of the chain corresponds to 38–478 (THNKPLPENV…LSPPLPHSTY (441 aa)). The N-terminal lobe stretch occupies residues 46-171 (NVKYGIVLDA…DFQGAKIITG (126 aa)). N-linked (GlcNAc...) asparagine glycosylation occurs at N73. C84 and C108 are disulfide-bonded. Catalysis depends on E174, which acts as the Proton acceptor. Residues 205–441 (QATFGALDLG…GTSWDQIHFM (237 aa)) form a C-terminal lobe region. 3 N-linked (GlcNAc...) asparagine glycosylation sites follow: N226, N291, and N333. Cystine bridges form between C254-C300 and C281-C324. A disulfide bond links C337 and C342. An N-linked (GlcNAc...) asparagine glycan is attached at N374. A disulfide bridge links C391 with C414. Residues N429 and N458 are each glycosylated (N-linked (GlcNAc...) asparagine). A helical membrane pass occupies residues 479–499 (ISLMVLFSLVLVAMVITGLFI). Topologically, residues 500 to 511 (FSKPSYFWKEAV) are cytoplasmic.

The protein belongs to the GDA1/CD39 NTPase family. As to quaternary structure, homodimer; disulfide-linked. Ca(2+) serves as cofactor. It depends on Mg(2+) as a cofactor. In terms of processing, N-glycosylated. Post-translationally, the N-terminus is blocked. Palmitoylated on Cys-13; which is required for caveola targeting. In terms of tissue distribution, expressed in primary neurons and astrocytes, kidney, liver, muscle, thymus, lung and spleen.

The protein resides in the membrane. Its subcellular location is the caveola. The catalysed reaction is a ribonucleoside 5'-triphosphate + 2 H2O = a ribonucleoside 5'-phosphate + 2 phosphate + 2 H(+). It carries out the reaction a ribonucleoside 5'-triphosphate + H2O = a ribonucleoside 5'-diphosphate + phosphate + H(+). The enzyme catalyses a ribonucleoside 5'-diphosphate + H2O = a ribonucleoside 5'-phosphate + phosphate + H(+). It catalyses the reaction ATP + 2 H2O = AMP + 2 phosphate + 2 H(+). The catalysed reaction is ATP + H2O = ADP + phosphate + H(+). It carries out the reaction ADP + H2O = AMP + phosphate + H(+). The enzyme catalyses CTP + 2 H2O = CMP + 2 phosphate + 2 H(+). It catalyses the reaction CTP + H2O = CDP + phosphate + H(+). The catalysed reaction is CDP + H2O = CMP + phosphate + H(+). It carries out the reaction GTP + 2 H2O = GMP + 2 phosphate + 2 H(+). The enzyme catalyses GTP + H2O = GDP + phosphate + H(+). It catalyses the reaction GDP + H2O = GMP + phosphate + H(+). The catalysed reaction is ITP + 2 H2O = IMP + 2 phosphate + 2 H(+). It carries out the reaction ITP + H2O = IDP + phosphate + H(+). The enzyme catalyses IDP + H2O = IMP + phosphate + H(+). It catalyses the reaction UTP + 2 H2O = UMP + 2 phosphate + 2 H(+). The catalysed reaction is UTP + H2O = UDP + phosphate + H(+). It carries out the reaction UDP + H2O = UMP + phosphate + H(+). In terms of biological role, catalyzes the hydrolysis of both di- and triphosphate nucleotides (NDPs and NTPs) and hydrolyze NTPs to nucleotide monophosphates (NMPs) in two distinct successive phosphate-releasing steps, with NDPs as intermediates and participates in the regulation of extracellular levels of nucleotides. By hydrolyzing proinflammatory ATP and platelet-activating ADP to AMP, it blocks platelet aggregation and supports blood flow. This chain is Ectonucleoside triphosphate diphosphohydrolase 1, found in Rattus norvegicus (Rat).